Reading from the N-terminus, the 317-residue chain is Glycine--tRNA ligase alpha subunit (317 aa).

Belongs to the class-II aminoacyl-tRNA synthetase family. In terms of assembly, tetramer of two alpha and two beta subunits.

It localises to the cytoplasm. The enzyme catalyses tRNA(Gly) + glycine + ATP = glycyl-tRNA(Gly) + AMP + diphosphate. In Leptothrix cholodnii (strain ATCC 51168 / LMG 8142 / SP-6) (Leptothrix discophora (strain SP-6)), this protein is Glycine--tRNA ligase alpha subunit.